A 156-amino-acid chain; its full sequence is Snaclec A5 (156 aa).

Positions 1–23 (MGRSISVSFGLLVVFLSLSGTGA) are cleaved as a signal peptide. Intrachain disulfides connect Cys-27-Cys-38, Cys-55-Cys-154, and Cys-129-Cys-146. A C-type lectin domain is found at 34–155 (HEGHCYKVFN…CGKPYRFTCE (122 aa)).

Belongs to the snaclec family. Heterodimer; disulfide-linked. In terms of tissue distribution, expressed by the venom gland.

The protein localises to the secreted. Its function is as follows. Interferes with one step of hemostasis (modulation of platelet aggregation, or coagulation cascade, for example). The polypeptide is Snaclec A5 (Macrovipera lebetinus (Levantine viper)).